We begin with the raw amino-acid sequence, 937 residues long: Protein translocase subunit SecA (937 aa).

Residues Gln87, 105–109 (GEGKT), and Asp494 each bind ATP. The segment at 881 to 937 (RGLNYIGPDEGGRASVHSDAEEYGGGTPAAAGTRRERREAARAEGKGKRGPKSRRKH) is disordered. 2 stretches are compositionally biased toward basic and acidic residues: residues 890-900 (EGGRASVHSDA) and 913-927 (TRRERREAARAEGKG). Over residues 928–937 (KRGPKSRRKH) the composition is skewed to basic residues.

The protein belongs to the SecA family. In terms of assembly, monomer and homodimer. Part of the essential Sec protein translocation apparatus which comprises SecA, SecYEG and auxiliary proteins SecDF. Other proteins may also be involved.

It localises to the cell membrane. The protein resides in the cytoplasm. The catalysed reaction is ATP + H2O + cellular proteinSide 1 = ADP + phosphate + cellular proteinSide 2.. In terms of biological role, part of the Sec protein translocase complex. Interacts with the SecYEG preprotein conducting channel. Has a central role in coupling the hydrolysis of ATP to the transfer of proteins into and across the cell membrane, serving as an ATP-driven molecular motor driving the stepwise translocation of polypeptide chains across the membrane. The sequence is that of Protein translocase subunit SecA from Nocardia farcinica (strain IFM 10152).